A 61-amino-acid polypeptide reads, in one-letter code: MARKAIIEKWSKTPKYKTRAYTRCRICGRPHAVLRKYGVCRICFRELAYKGEIPGCRKASW.

The Zn(2+) site is built by Cys24, Cys27, Cys40, and Cys43.

The protein belongs to the universal ribosomal protein uS14 family. Zinc-binding uS14 subfamily. As to quaternary structure, part of the 30S ribosomal subunit. Contacts proteins S3 and S10. It depends on Zn(2+) as a cofactor.

Its function is as follows. Binds 16S rRNA, required for the assembly of 30S particles and may also be responsible for determining the conformation of the 16S rRNA at the A site. This is Small ribosomal subunit protein uS14 from Clostridium botulinum (strain Alaska E43 / Type E3).